A 360-amino-acid polypeptide reads, in one-letter code: Decorin (360 aa).

Residues Met-1–Ala-16 form the signal peptide. Positions Gly-17–Glu-30 are excised as a propeptide. O-linked (Xyl...) (glycosaminoglycan) serine glycosylation is present at Ser-34. Cystine bridges form between Cys-55–Cys-61 and Cys-59–Cys-68. 12 LRR repeats span residues Glu-74 to Ile-94, Thr-95 to Ile-118, Ser-119 to Leu-142, Lys-143 to Ile-163, Thr-164 to Leu-187, Lys-188 to Ile-213, Thr-214 to Ile-234, Thr-235 to Ile-258, Ser-259 to Leu-282, Val-283 to Ile-305, Ser-306 to Val-335, and Gln-336 to Lys-360. An N-linked (GlcNAc...) asparagine glycan is attached at Asn-212. Residues Asn-263 and Asn-304 are each glycosylated (N-linked (GlcNAc...) asparagine). A disulfide bridge links Cys-314 with Cys-347.

The protein belongs to the small leucine-rich proteoglycan (SLRP) family. SLRP class I subfamily. Binds to type I and type II collagen, fibronectin and TGF-beta. Forms a ternary complex with MFAP2 and ELN. Interacts with DPT. The attached glycosaminoglycan chain can be either chondroitin sulfate or dermatan sulfate depending upon the tissue of origin.

It localises to the secreted. Its subcellular location is the extracellular space. The protein localises to the extracellular matrix. May affect the rate of fibrils formation. The sequence is that of Decorin (DCN) from Ovis aries (Sheep).